The primary structure comprises 149 residues: Small heat shock protein IbpB (149 aa).

The region spanning 26–137 (SQEPIDFPPY…QPQRIAIGGG (112 aa)) is the sHSP domain.

Belongs to the small heat shock protein (HSP20) family. As to quaternary structure, homodimer. Forms homomultimers of about 100-150 subunits at optimal growth temperatures. Conformation changes to oligomers at high temperatures or high ionic concentrations. The decrease in size of the multimers is accompanied by an increase in chaperone activity.

Its subcellular location is the cytoplasm. Its function is as follows. Associates with aggregated proteins, together with IbpA, to stabilize and protect them from irreversible denaturation and extensive proteolysis during heat shock and oxidative stress. Aggregated proteins bound to the IbpAB complex are more efficiently refolded and reactivated by the ATP-dependent chaperone systems ClpB and DnaK/DnaJ/GrpE. Its activity is ATP-independent. This Pectobacterium carotovorum subsp. carotovorum (strain PC1) protein is Small heat shock protein IbpB.